Reading from the N-terminus, the 281-residue chain is BURP domain-containing protein BNM2C (281 aa).

An N-terminal signal peptide occupies residues 1-25; the sequence is MASLRFSVTFPALFSLLLSLWVVDA. One can recognise a BURP domain in the interval 59–281; it reads FFKISDLKLG…PLDNIVWVSK (223 aa).

In terms of tissue distribution, expressed in the radicle of germinating seeds 2 days post-imbibition (DPI) and in roots of 30-DPI young plants. Expressed in the embryo and seed coat tissues of developing seeds. The protein accumulates only in seeds and only long after transcript accumulation becomes evident.

It localises to the protein storage vacuole. In Brassica napus (Rape), this protein is BURP domain-containing protein BNM2C.